Here is a 938-residue protein sequence, read N- to C-terminus: Breast cancer type 2 susceptibility protein homolog (938 aa).

Composition is skewed to basic and acidic residues over residues 320-339 (LEPSFQKEQKSSKDSNESKI) and 409-425 (NSIKRTDEEQPEKETPN). 2 disordered regions span residues 320 to 359 (LEPSFQKEQKSSKDSNESKIRAPSKPSCDITEKNEGTTVL) and 409 to 434 (NSIKRTDEEQPEKETPNKSRSTSSHQ). BRCA2 repeat units lie at residues 537–571 (AEPEFCGFRTASNKAIPISEKMKIKTAEFMAEFQY), 638–672 (NEPQFFGFRTASKKAIEITEAMEKRGAMFLAQSRA), and 713–747 (SETEFFGFRTASNKGIVISENTKMKVAQFMSEFQA). Positions 870 to 879 (SSTETSTSCA) are enriched in polar residues. Positions 870-938 (SSTETSTSCA…RRLGLSRSRY (69 aa)) are disordered. Positions 898 to 915 (ADRDLNRSKDCAKNRQDA) are enriched in basic and acidic residues. Over residues 926–938 (KKSRRLGLSRSRY) the composition is skewed to basic residues.

As to quaternary structure, interacts with Rad9 and spn-A/Rad51.

It localises to the nucleus. Its function is as follows. Involved in and required for double-strand break repair by meiotic and mitotic homologous recombination. During meiosis, has a dual role in the repair of meiotic double-stranded breaks and the efficient activation of the meiotic recombination checkpoint. The chain is Breast cancer type 2 susceptibility protein homolog from Drosophila sechellia (Fruit fly).